Here is a 237-residue protein sequence, read N- to C-terminus: 1-(5-phosphoribosyl)-5-[(5-phosphoribosylamino)methylideneamino] imidazole-4-carboxamide isomerase (237 aa).

The active-site Proton acceptor is the D8. The active-site Proton donor is D129.

It belongs to the HisA/HisF family.

The protein resides in the cytoplasm. The enzyme catalyses 1-(5-phospho-beta-D-ribosyl)-5-[(5-phospho-beta-D-ribosylamino)methylideneamino]imidazole-4-carboxamide = 5-[(5-phospho-1-deoxy-D-ribulos-1-ylimino)methylamino]-1-(5-phospho-beta-D-ribosyl)imidazole-4-carboxamide. The protein operates within amino-acid biosynthesis; L-histidine biosynthesis; L-histidine from 5-phospho-alpha-D-ribose 1-diphosphate: step 4/9. This chain is 1-(5-phosphoribosyl)-5-[(5-phosphoribosylamino)methylideneamino] imidazole-4-carboxamide isomerase, found in Methanosphaera stadtmanae (strain ATCC 43021 / DSM 3091 / JCM 11832 / MCB-3).